The primary structure comprises 145 residues: RNA polymerase I-specific transcription initiation factor RRN10 (145 aa).

In terms of assembly, component of the UAF (upstream activation factor) complex which consists of UAF30, RRN5, RRN9, RRN10, and histones H3 and H4.

Its subcellular location is the nucleus. The protein resides in the nucleolus. In terms of biological role, component of the UAF (upstream activation factor) complex which interacts with the upstream element of the RNA polymerase I promoter and forms a stable preinitiation complex. Together with SPT15/TBP UAF seems to stimulate basal transcription to a fully activated level. The sequence is that of RNA polymerase I-specific transcription initiation factor RRN10 (RRN10) from Saccharomyces cerevisiae (strain ATCC 204508 / S288c) (Baker's yeast).